We begin with the raw amino-acid sequence, 270 residues long: Transcription factor bHLH113 (270 aa).

The interval 109-153 is disordered; the sequence is CTVDKSTKSSTKKRTGTGNGQESDQNRKPGKKGKRNQEKSSVGIA. The 50-residue stretch at 144-193 folds into the bHLH domain; sequence NQEKSSVGIAKVRKERLGERIAALQQLVSPYGKTDAASVLHEAMGYIKFL.

Homodimer.

The protein localises to the nucleus. The polypeptide is Transcription factor bHLH113 (BHLH113) (Arabidopsis thaliana (Mouse-ear cress)).